The primary structure comprises 616 residues: Dihydroxy-acid dehydratase (616 aa).

Asp-81 is a binding site for Mg(2+). Cys-122 provides a ligand contact to [2Fe-2S] cluster. Mg(2+) contacts are provided by Asp-123 and Lys-124. An N6-carboxylysine modification is found at Lys-124. Residue Cys-195 participates in [2Fe-2S] cluster binding. Glu-491 contributes to the Mg(2+) binding site. Residue Ser-517 is the Proton acceptor of the active site.

The protein belongs to the IlvD/Edd family. In terms of assembly, homodimer. Requires [2Fe-2S] cluster as cofactor. The cofactor is Mg(2+).

The catalysed reaction is (2R)-2,3-dihydroxy-3-methylbutanoate = 3-methyl-2-oxobutanoate + H2O. It catalyses the reaction (2R,3R)-2,3-dihydroxy-3-methylpentanoate = (S)-3-methyl-2-oxopentanoate + H2O. It functions in the pathway amino-acid biosynthesis; L-isoleucine biosynthesis; L-isoleucine from 2-oxobutanoate: step 3/4. The protein operates within amino-acid biosynthesis; L-valine biosynthesis; L-valine from pyruvate: step 3/4. Functions in the biosynthesis of branched-chain amino acids. Catalyzes the dehydration of (2R,3R)-2,3-dihydroxy-3-methylpentanoate (2,3-dihydroxy-3-methylvalerate) into 2-oxo-3-methylpentanoate (2-oxo-3-methylvalerate) and of (2R)-2,3-dihydroxy-3-methylbutanoate (2,3-dihydroxyisovalerate) into 2-oxo-3-methylbutanoate (2-oxoisovalerate), the penultimate precursor to L-isoleucine and L-valine, respectively. This is Dihydroxy-acid dehydratase from Shigella flexneri.